A 292-amino-acid polypeptide reads, in one-letter code: 6-phospho-5-dehydro-2-deoxy-D-gluconate aldolase (292 aa).

The active-site Proton donor is aspartate 85. Residues histidine 86 and histidine 180 each contribute to the Zn(2+) site. Dihydroxyacetone phosphate is bound at residue glycine 181. A Zn(2+)-binding site is contributed by histidine 208. Dihydroxyacetone phosphate-binding positions include 209 to 211 and 230 to 233; these read GAS and NINT. The residue at position 233 (threonine 233) is a Phosphothreonine.

Belongs to the class II fructose-bisphosphate aldolase family. IolJ subfamily. Zn(2+) serves as cofactor.

It carries out the reaction 6-phospho-5-dehydro-2-deoxy-D-gluconate = 3-oxopropanoate + dihydroxyacetone phosphate. It participates in polyol metabolism; myo-inositol degradation into acetyl-CoA; acetyl-CoA from myo-inositol: step 6/7. In terms of biological role, produces dihydroxyacetone phosphate (DHAP or glycerone phosphate) and malonic semialdehyde (MSA or 3-oxopropanoate) from 6-phospho-5-dehydro-2-deoxy-D-gluconate (DKGP). The sequence is that of 6-phospho-5-dehydro-2-deoxy-D-gluconate aldolase (iolJ) from Bacillus licheniformis (strain ATCC 14580 / DSM 13 / JCM 2505 / CCUG 7422 / NBRC 12200 / NCIMB 9375 / NCTC 10341 / NRRL NRS-1264 / Gibson 46).